A 2547-amino-acid polypeptide reads, in one-letter code: Lovastatin diketide synthase mokB (2547 aa).

Residues 10 to 430 enclose the Ketosynthase family 3 (KS3) domain; it reads PTPIAVVGMG…GANAHAIVER (421 aa). Residues cysteine 183, histidine 318, and histidine 353 each act as for beta-ketoacyl synthase activity in the active site. Residues 545 to 890 are acyl and malonyl transferase; it reads VFTGQGAQWF…MDLLQGGYPV (346 aa). Catalysis depends on serine 635, which acts as the For malonyltransferase activity. The interval 941 to 1079 is N-terminal hotdog fold; the sequence is HDLIGVQEPL…GLIRAQVDHP (139 aa). The PKS/mFAS DH domain maps to 941–1252; it reads HDLIGVQEPL…FQSLGAVISD (312 aa). The active-site Proton acceptor; for dehydratase activity is the histidine 973. The interval 973-985 is dehydratase-like; the sequence is HVVGSRILFPGAG. The interval 1095–1252 is C-terminal hotdog fold; sequence SRKMAPQDLW…FQSLGAVISD (158 aa). Aspartate 1160 acts as the Proton donor; for dehydratase activity in catalysis. Cysteine 1340 and cysteine 1379 are disulfide-bonded. Residues 1510–1547 form a methyltransferase region; the sequence is YDVVLACQVLHATSNMQRTLNNVRKLLKPGGKLILVET. Residues 2459 to 2541 form the Carrier domain; it reads ASTEEEATAL…EVAEVVVKKY (83 aa). Serine 2501 is subject to O-(pantetheine 4'-phosphoryl)serine.

Pantetheine 4'-phosphate serves as cofactor.

It catalyses the reaction holo-[2-methylbutanoate polyketide synthase] + 2 malonyl-CoA + S-adenosyl-L-methionine + 2 NADPH + 3 H(+) = (S)-2-methylbutanoyl-[2-methylbutanoate polyketide synthase] + S-adenosyl-L-homocysteine + 2 CO2 + 2 NADP(+) + 2 CoA + H2O. The protein operates within polyketide biosynthesis; lovastatin biosynthesis. Diketide synthase; part of the gene cluster that mediates the biosynthesis of monakolin K, also known as lovastatin, and which acts as a potent competitive inhibitor of HMG-CoA reductase. Monakolin K biosynthesis is performed in two stages. The first stage is catalyzed by the nonaketide synthase mokA, which belongs to type I polyketide synthases and catalyzes the iterative nine-step formation of the polyketide. This PKS stage completed by the action of dehydrogenase mokE, which catalyzes the NADPH-dependent reduction of the unsaturated tetra-, penta- and heptaketide intermediates that arise during the mokA-mediated biosynthesis of the nonaketide chain and leads to dihydromonacolin L. Covalently bound dihydromonacolin L is released from mokA by the mokD esterase. Conversion of dihydromonacolin L into monacolin L and then monacolin J is subsequently performed with the participation of molecular oxygen and P450 monoogygenase mokC. Finally, mokF performs the conversion of monacoline J to monacoline K through the addition of the side-chain diketide moiety (2R)-2-methylbutanoate produced by the diketide synthase mokB. The sequence is that of Lovastatin diketide synthase mokB from Monascus pilosus (Red mold).